The following is a 784-amino-acid chain: MPHTLWMVWVLGVIISLSKEESSNQASLSCDRNGICKGSSGSLNSIPSGLTEAVKSLDLSNNRITYISNSDLQRCVNLQALVLTSNGINTIEEDSFSSLGSLEHLDLSYNYLSNLSSSWFKPLSSLTFLNLLGNPYKTLGETSLFSHLTKLQILRVGNMDTFTKIQRKDFAGLTFLEELEIDASDLQSYEPKSLKSIQNVSHLILHMKQHILLLEIFVDVTSSVECLELRDTDLDTFHFSELSTGETNSLIKKFTFRNVKITDESLFQVMKLLNQISGLLELEFDDCTLNGVGNFRASDNDRVIDPGKVETLTIRRLHIPRFYLFYDLSTLYSLTERVKRITVENSKVFLVPCLLSQHLKSLEYLDLSENLMVEEYLKNSACEDAWPSLQTLILRQNHLASLEKTGETLLTLKNLTNIDISKNSFHSMPETCQWPEKMKYLNLSSTRIHSVTGCIPKTLEILDVSNNNLNLFSLNLPQLKELYISRNKLMTLPDASLLPMLLVLKISRNAITTFSKEQLDSFHTLKTLEAGGNNFICSCEFLSFTQEQQALAKVLIDWPANYLCDSPSHVRGQQVQDVRLSVSECHRTALVSGMCCALFLLILLTGVLCHRFHGLWYMKMMWAWLQAKRKPRKAPSRNICYDAFVSYSERDAYWVENLMVQELENFNPPFKLCLHKRDFIPGKWIIDNIIDSIEKSHKTVFVLSENFVKSEWCKYELDFSHFRLFDENNDAAILILLEPIEKKAIPQRFCKLRKIMNTKTYLEWPMDEAQREGFWVNLRAAIKS.

The first 20 residues, 1-20 (MPHTLWMVWVLGVIISLSKE), serve as a signal peptide directing secretion. Residues 21–588 (ESSNQASLSC…RLSVSECHRT (568 aa)) lie on the Extracellular side of the membrane. A disulfide bridge links Cys30 with Cys36. LRR repeat units lie at residues 54 to 77 (VKSL…RCVN), 78 to 101 (LQAL…SLGS), 102 to 125 (LEHL…PLSS), 126 to 150 (LTFL…HLTK), 151 to 175 (LQIL…GLTF), 176 to 199 (LEEL…SIQN), 200 to 223 (VSHL…VTSS), 224 to 250 (VECL…TNSL), 251 to 278 (IKKF…QISG), 279 to 308 (LLEL…DPGK), 309 to 337 (VETL…LTER), 338 to 361 (VKRI…HLKS), 362 to 388 (LEYL…AWPS), 389 to 414 (LQTL…TLKN), 415 to 437 (LTNI…WPEK), 438 to 457 (MKYL…CIPK), 458 to 478 (TLEI…NLPQ), 479 to 500 (LKEL…LLPM), and 501 to 524 (LLVL…SFHT). N-linked (GlcNAc...) asparagine glycosylation is present at Asn114. Residue Asn199 is glycosylated (N-linked (GlcNAc...) asparagine). Cys353 and Cys382 are disulfide-bonded. N-linked (GlcNAc...) asparagine glycosylation is present at Asn414. A disulfide bond links Cys432 and Cys454. Asn442 carries N-linked (GlcNAc...) asparagine glycosylation. Positions 525 to 579 (LKTLEAGGNNFICSCEFLSFTQEQQALAKVLIDWPANYLCDSPSHVRGQQVQDVR) constitute an LRRCT domain. Residues 589–609 (ALVSGMCCALFLLILLTGVLC) traverse the membrane as a helical segment. At 610-784 (HRFHGLWYMK…WVNLRAAIKS (175 aa)) the chain is on the cytoplasmic side. One can recognise a TIR domain in the interval 639–782 (ICYDAFVSYS…GFWVNLRAAI (144 aa)). Lys754 is covalently cross-linked (Glycyl lysine isopeptide (Lys-Gly) (interchain with G-Cter in ubiquitin)). Positions 761–778 (YLEWPMDEAQREGFWVNL) match the ATG16L1-binding motif motif.

It belongs to the Toll-like receptor family. As to quaternary structure, interacts with LY96, TLR1 and TLR6 (via extracellular domain). TLR2 seems to exist in heterodimers with either TLR1 or TLR6 before stimulation by the ligand. The heterodimers form bigger oligomers in response to their corresponding ligands as well as further heterotypic associations with other receptors such as CD14 and/or CD36. Binds MYD88 (via TIR domain). Interacts with TICAM1. Interacts with CNPY3. Interacts with ATG16L1. Interacts with PPP1R11. Interacts with TICAM2. Interacts with TIRAP. (Microbial infection) Interacts with M.tuberculosis EsxA. In terms of assembly, (Microbial infection) Interacts with M.bovis MPB83. As to quaternary structure, (Microbial infection) Interacts with Staphylococcus aureus protein SSL5. In terms of processing, glycosylation of Asn-442 is critical for secretion of the N-terminal ectodomain of TLR2. Ubiquitinated at Lys-754 by PPP1R11, leading to its degradation. Deubiquitinated by USP2. As to expression, highly expressed in peripheral blood leukocytes, in particular in monocytes, in bone marrow, lymph node and in spleen. Also detected in lung and in fetal liver. Levels are low in other tissues.

The protein resides in the membrane. It is found in the cytoplasmic vesicle. Its subcellular location is the phagosome membrane. It localises to the membrane raft. Functionally, cooperates with LY96 to mediate the innate immune response to bacterial lipoproteins and other microbial cell wall components. Cooperates with TLR1 or TLR6 to mediate the innate immune response to bacterial lipoproteins or lipopeptides. Acts via MYD88 and TRAF6, leading to NF-kappa-B activation, cytokine secretion and the inflammatory response. May also activate immune cells and promote apoptosis in response to the lipid moiety of lipoproteins. Recognizes mycoplasmal macrophage-activating lipopeptide-2kD (MALP-2), soluble tuberculosis factor (STF), phenol-soluble modulin (PSM) and B.burgdorferi outer surface protein A lipoprotein (OspA-L) cooperatively with TLR6. Stimulation of monocytes in vitro with M.tuberculosis PstS1 induces p38 MAPK and ERK1/2 activation primarily via this receptor, but also partially via TLR4. MAPK activation in response to bacterial peptidoglycan also occurs via this receptor. Acts as a receptor for M.tuberculosis lipoproteins LprA, LprG, LpqH and PstS1, some lipoproteins are dependent on other coreceptors (TLR1, CD14 and/or CD36); the lipoproteins act as agonists to modulate antigen presenting cell functions in response to the pathogen. M.tuberculosis HSP70 (dnaK) but not HSP65 (groEL-2) acts via this protein to stimulate NF-kappa-B expression. Recognizes M.tuberculosis major T-antigen EsxA (ESAT-6) which inhibits downstream MYD88-dependent signaling (shown in mouse). Forms activation clusters composed of several receptors depending on the ligand, these clusters trigger signaling from the cell surface and subsequently are targeted to the Golgi in a lipid-raft dependent pathway. Forms the cluster TLR2:TLR6:CD14:CD36 in response to diacylated lipopeptides and TLR2:TLR1:CD14 in response to triacylated lipopeptides. Required for normal uptake of M.tuberculosis, a process that is inhibited by M.tuberculosis LppM. The polypeptide is Toll-like receptor 2 (Homo sapiens (Human)).